A 409-amino-acid polypeptide reads, in one-letter code: Lipoyl synthase, mitochondrial (409 aa).

The segment at 21–41 (QQQVPPSEEPRNESGAANPPL) is disordered. Residues Cys125, Cys130, Cys136, Cys159, Cys163, Cys166, and Ser375 each contribute to the [4Fe-4S] cluster site. Positions 142–364 (EEGDGTATAT…EKEALDMGFL (223 aa)) constitute a Radical SAM core domain.

It belongs to the radical SAM superfamily. Lipoyl synthase family. It depends on [4Fe-4S] cluster as a cofactor.

It is found in the mitochondrion. The catalysed reaction is [[Fe-S] cluster scaffold protein carrying a second [4Fe-4S](2+) cluster] + N(6)-octanoyl-L-lysyl-[protein] + 2 oxidized [2Fe-2S]-[ferredoxin] + 2 S-adenosyl-L-methionine + 4 H(+) = [[Fe-S] cluster scaffold protein] + N(6)-[(R)-dihydrolipoyl]-L-lysyl-[protein] + 4 Fe(3+) + 2 hydrogen sulfide + 2 5'-deoxyadenosine + 2 L-methionine + 2 reduced [2Fe-2S]-[ferredoxin]. It participates in protein modification; protein lipoylation via endogenous pathway; protein N(6)-(lipoyl)lysine from octanoyl-[acyl-carrier-protein]: step 2/2. Its function is as follows. Catalyzes the radical-mediated insertion of two sulfur atoms into the C-6 and C-8 positions of the octanoyl moiety bound to the lipoyl domains of lipoate-dependent enzymes, thereby converting the octanoylated domains into lipoylated derivatives. The sequence is that of Lipoyl synthase, mitochondrial from Trypanosoma brucei gambiense (strain MHOM/CI/86/DAL972).